The chain runs to 316 residues: Protein C4 (316 aa).

It belongs to the poxviridae OPG031 protein family.

It is found in the host cytoplasm. It localises to the host nucleus. Functionally, plays a role in the inhibition of host NF-kappa-B activation. Mechanistically, blocks the subunit p65/RELA translocation into the host nucleus. The protein is Protein C4 (OPG031) of Vaccinia virus (strain Western Reserve) (VACV).